The primary structure comprises 424 residues: Envelope glycoprotein M (424 aa).

At 1–23 (MASRARMERNYRGLSHIDYVHKK) the chain is on the intravirion side. A helical transmembrane segment spans residues 24–44 (MWVVQAVCFGIAVLVFFGTLV). At 45-94 (AASINLTEGFPCFFAAVVDYRTVNTTLVHTGLTYPRLGGVVPVLFFQTKA) the chain is on the virion surface side. A helical membrane pass occupies residues 95-115 (VVFFFYATSIVFVFLVCYITV). Topologically, residues 116 to 143 (GAIISSKKHVGAAYMGSGAFVFSLMASP) are intravirion. Residues 144-164 (LTILLGTVSIWLLQAVVIVLA) traverse the membrane as a helical segment. At 165-166 (HK) the chain is on the virion surface side. The chain crosses the membrane as a helical span at residues 167–187 (LIVLAAAVYLVHFSTITFFYG). The Intravirion portion of the chain corresponds to 188 to 226 (YFCGRGVDSKVYAEDISSAKDIDGSLHKLIGNVRAMMVN). The helical transmembrane segment at 227 to 247 (LLSIVYSIILIMSSLMFGMLL) threads the bilayer. Topologically, residues 248–261 (ANSFTLKFWHVIVT) are virion surface. The helical transmembrane segment at 262–282 (VLITTSVLTLIYLLVIEFLIA) threads the bilayer. A topological domain (intravirion) is located at residue Arg283. A helical transmembrane segment spans residues 284 to 304 (YVHIILGAYIGLLIGYGMLWT). At 305–327 (TTCDYVNRFYYAMGANASNLRIA) the chain is on the virion surface side. A helical transmembrane segment spans residues 328–348 (CHSVLAVFTVLILLAMVVRLI). Over 349-424 (RASLYHRRRS…YSGSESEWDD (76 aa)) the chain is Intravirion. The interval 382–424 (SYKQRGSQSEDERALTQSRSAEASDEDTIYDRVYSGSESEWDD) is disordered.

The protein belongs to the herpesviridae glycoprotein M family. In terms of assembly, interacts (via N-terminus) with gN (via N-terminus). The gM-gN heterodimer forms the gCII complex.

The protein resides in the virion membrane. It localises to the host Golgi apparatus. It is found in the host trans-Golgi network. Its subcellular location is the host endosome membrane. The protein localises to the host nucleus inner membrane. Functionally, envelope glycoprotein important for virion assembly and egress. Plays a role in the correct incorporation of gH-gL into virion membrane. Directs the glycoprotein N (gN) to the host trans-Golgi network. The polypeptide is Envelope glycoprotein M (Gallid herpesvirus 2 (strain Chicken/Md5/ATCC VR-987) (GaHV-2)).